The following is a 147-amino-acid chain: Large ribosomal subunit protein uL16 (147 aa).

The tract at residues 1–20 is disordered; it reads MLMPKKVKHRKVQRGRMKGK.

It belongs to the universal ribosomal protein uL16 family. Part of the 50S ribosomal subunit.

Functionally, binds 23S rRNA and is also seen to make contacts with the A and possibly P site tRNAs. This is Large ribosomal subunit protein uL16 from Clostridium kluyveri (strain ATCC 8527 / DSM 555 / NBRC 12016 / NCIMB 10680 / K1).